Reading from the N-terminus, the 618-residue chain is DNA mismatch repair protein MutL (618 aa).

Belongs to the DNA mismatch repair MutL/HexB family.

In terms of biological role, this protein is involved in the repair of mismatches in DNA. It is required for dam-dependent methyl-directed DNA mismatch repair. May act as a 'molecular matchmaker', a protein that promotes the formation of a stable complex between two or more DNA-binding proteins in an ATP-dependent manner without itself being part of a final effector complex. The sequence is that of DNA mismatch repair protein MutL from Bradyrhizobium sp. (strain BTAi1 / ATCC BAA-1182).